A 249-amino-acid chain; its full sequence is Phosphoribosylaminoimidazole-succinocarboxamide synthase (249 aa).

It belongs to the SAICAR synthetase family.

The enzyme catalyses 5-amino-1-(5-phospho-D-ribosyl)imidazole-4-carboxylate + L-aspartate + ATP = (2S)-2-[5-amino-1-(5-phospho-beta-D-ribosyl)imidazole-4-carboxamido]succinate + ADP + phosphate + 2 H(+). It participates in purine metabolism; IMP biosynthesis via de novo pathway; 5-amino-1-(5-phospho-D-ribosyl)imidazole-4-carboxamide from 5-amino-1-(5-phospho-D-ribosyl)imidazole-4-carboxylate: step 1/2. This chain is Phosphoribosylaminoimidazole-succinocarboxamide synthase, found in Roseiflexus castenholzii (strain DSM 13941 / HLO8).